The chain runs to 371 residues: GDSL esterase/lipase At3g27950 (371 aa).

The signal sequence occupies residues 1-23 (MAISKITLAIIVLLLGFTEKLSA). S39 (nucleophile) is an active-site residue. N82, N143, N178, N194, and N315 each carry an N-linked (GlcNAc...) asparagine glycan. Residues D334 and H337 contribute to the active site.

It belongs to the 'GDSL' lipolytic enzyme family.

It localises to the secreted. The protein is GDSL esterase/lipase At3g27950 of Arabidopsis thaliana (Mouse-ear cress).